Reading from the N-terminus, the 760-residue chain is MENNRNFPARQFHSLTFFAGLCIGITPVAQALAAEGQANADDTLVVEASTPSLYAPQQSADPKFSRPVADTTRTMTVISEQVIKDQGATNLTDALKNVPGVGAFFAGENGNSTTGDAIYMRGADTSNSIYIDGIRDIGSVSRDTFNTEQVEVIKGPSGTDYGRSAPTGSINMISKQPRNDSGIDASASIGSAWFRRGTLDVNQVIGDTTAVRLNVMGEKTHDAGRDKVKNERYGVAPSVAFGLGTANRLYLNYLHVTQHNTPDGGIPTIGLPGYSAPSAGTAALNHSGKVDTHNFYGTDSDYDDSTTDTATMRFEHDINDNTTIRNTTRWSRVKQDYLMTAIMGGASNITQPTSDVNSWTWSRTANTKDVSNKILTNQTNLTSTFYTGAIGHDVSTGVEFTRETQTNYGVNPVTLPAVNIYHPDSSIHPGGLTRNGANANGQTDTFAIYAFDTLQITRDFELNGGIRLDNYHTEYDSATACGGSGRGAITCPAGVAKGSPVTTVDTAKSGNLVNWKAGALYHLTENGNIYINYAVSQQPPGGNNFALAQSGSGNSANRTDFKPQKANTSEIGTKWQVLDKRLLLTAALFRTDIENEVEQNDDGTYSQYGKKRVEGYEISVAGNITPAWQMIGGYTQQKATIKNGKDVAQDGSSSLPYTPEHAFTLWSQYQATDDISVGAGARYIGSMHKGSDGAVGTPAFTEGYWVADAKLGYRVNRNLDFQLNVYNLFDTDYVASINKSGYRYHPGEPRTFLLTANMHF.

An N-terminal signal peptide occupies residues 1-31 (MENNRNFPARQFHSLTFFAGLCIGITPVAQA). The TBDR plug domain occupies 67-175 (PVADTTRTMT…PTGSINMISK (109 aa)). One can recognise a TBDR beta-barrel domain in the interval 180–760 (DSGIDASASI…TFLLTANMHF (581 aa)). A TonB C-terminal box motif is present at residues 743–760 (RYHPGEPRTFLLTANMHF).

The protein belongs to the TonB-dependent receptor family.

It localises to the cell outer membrane. Involved in the active transport across the outer membrane of iron complexed with catecholate siderophores such as dihydroxybenzoylserine and dihydroxybenzoate. It derives its energy for transport by interacting with the trans-periplasmic membrane protein TonB. Can also transport catechol-substituted cephalosporins. Receptor for microcins M, H47 and E492. The polypeptide is Catecholate siderophore receptor Fiu (fiu) (Escherichia coli (strain UTI89 / UPEC)).